A 79-amino-acid polypeptide reads, in one-letter code: Small ribosomal subunit protein bS16 (79 aa).

Belongs to the bacterial ribosomal protein bS16 family.

This Oleidesulfovibrio alaskensis (strain ATCC BAA-1058 / DSM 17464 / G20) (Desulfovibrio alaskensis) protein is Small ribosomal subunit protein bS16.